The chain runs to 290 residues: MTGIKFDQGKAPLSLIDPRFTEEVARVLAIGEQKYGRANWQGLKIERLLDAVKRHVLELEKSNDHDDETGLHHAAHAASGLMFIFWLLNNRPTSDDRRWSAAVPGVREQRGSVQPVPDSEEGLDMQPVPAPSPSRSKKRAYSTGTIADVQKLISGWADRTFPDRTIGEAILKLKKELAELDTASYLDAGEFADVAILLLDIAQLAGIDIATAVANKMAINERRVWQRLEDGTHQHVIDGGRTDGVDPIIRVAMLPTDPTGSHLCVVCGQRFGSEDDRASHYTTTHGDRKP.

The segment at 103 to 141 is disordered; the sequence is VPGVREQRGSVQPVPDSEEGLDMQPVPAPSPSRSKKRAY. The C2H2-type zinc-finger motif lies at 262-285; the sequence is HLCVVCGQRFGSEDDRASHYTTTH.

The protein belongs to the Caudovirales dATP/dGTP diphosphohydrolase family. Co(2+) serves as cofactor.

It catalyses the reaction dGTP + H2O = dGMP + diphosphate + H(+). The catalysed reaction is dATP + H2O = dAMP + diphosphate + H(+). The protein operates within purine metabolism. Its function is as follows. Catalyzes the hydrolysis of dGTP into dGMP, which is needed among other for the first step of biosynthesis of dZTP (2-amino-2'-deoxyadenosine-5'-triphosphate). The sequence is that of dATP/dGTP diphosphohydrolase from Salmonella phage PMBT28.